The primary structure comprises 666 residues: ATP-dependent zinc metalloprotease FtsH (666 aa).

Residues 1–23 (MSREVTSGLPQDKPTGSAPPPPP) are disordered. The Cytoplasmic segment spans residues 1 to 27 (MSREVTSGLPQDKPTGSAPPPPPPWRR). Residues 28-48 (WLLPIGLLVSLVLLFTFPMRP) form a helical membrane-spanning segment. At 49–125 (SSGKTLTYSE…RPPGPSLASQ (77 aa)) the chain is on the extracellular side. Residues 126-146 (VLAGVLSFLPFLLLLGLFAYS) form a helical membrane-spanning segment. At 147-666 (GRRAGAGFLA…RTAASSDDLL (520 aa)) the chain is on the cytoplasmic side. 219-226 (GPPGTGKT) contributes to the ATP binding site. Residue H442 participates in Zn(2+) binding. E443 is a catalytic residue. H446 and D518 together coordinate Zn(2+). Residues 626–666 (PEEHREAAARHVRRPGIAAATGASMAGGSEPRTAASSDDLL) form a disordered region. Positions 641-653 (GIAAATGASMAGG) are enriched in low complexity.

This sequence in the central section; belongs to the AAA ATPase family. The protein in the C-terminal section; belongs to the peptidase M41 family. In terms of assembly, homohexamer. Zn(2+) is required as a cofactor.

The protein localises to the cell membrane. Acts as a processive, ATP-dependent zinc metallopeptidase for both cytoplasmic and membrane proteins. Plays a role in the quality control of integral membrane proteins. In Acidothermus cellulolyticus (strain ATCC 43068 / DSM 8971 / 11B), this protein is ATP-dependent zinc metalloprotease FtsH.